We begin with the raw amino-acid sequence, 470 residues long: ATP synthase subunit beta (470 aa).

155 to 162 (GGAGVGKT) contributes to the ATP binding site.

Belongs to the ATPase alpha/beta chains family. In terms of assembly, F-type ATPases have 2 components, CF(1) - the catalytic core - and CF(0) - the membrane proton channel. CF(1) has five subunits: alpha(3), beta(3), gamma(1), delta(1), epsilon(1). CF(0) has three main subunits: a(1), b(2) and c(9-12). The alpha and beta chains form an alternating ring which encloses part of the gamma chain. CF(1) is attached to CF(0) by a central stalk formed by the gamma and epsilon chains, while a peripheral stalk is formed by the delta and b chains.

The protein resides in the cell membrane. The catalysed reaction is ATP + H2O + 4 H(+)(in) = ADP + phosphate + 5 H(+)(out). Functionally, produces ATP from ADP in the presence of a proton gradient across the membrane. The catalytic sites are hosted primarily by the beta subunits. This is ATP synthase subunit beta from Staphylococcus epidermidis (strain ATCC 35984 / DSM 28319 / BCRC 17069 / CCUG 31568 / BM 3577 / RP62A).